The chain runs to 434 residues: Histidine--tRNA ligase (434 aa).

The protein belongs to the class-II aminoacyl-tRNA synthetase family. As to quaternary structure, homodimer.

The protein resides in the cytoplasm. It catalyses the reaction tRNA(His) + L-histidine + ATP = L-histidyl-tRNA(His) + AMP + diphosphate + H(+). This Latilactobacillus sakei subsp. sakei (strain 23K) (Lactobacillus sakei subsp. sakei) protein is Histidine--tRNA ligase.